The primary structure comprises 513 residues: Melianol synthase CYP71BQ4 (513 aa).

A helical transmembrane segment spans residues 10–30; sequence MLHLPSLPVLLSFLLFLLMLI. Position 451 (Cys-451) interacts with heme.

This sequence belongs to the cytochrome P450 family. The cofactor is heme. In terms of tissue distribution, accumulates in mature fruits and in juice vesicles.

Its subcellular location is the membrane. The enzyme catalyses dihydroniloticin + 2 reduced [NADPH--hemoprotein reductase] + 2 O2 = melianol + 2 oxidized [NADPH--hemoprotein reductase] + 3 H2O + 2 H(+). Its pathway is secondary metabolite biosynthesis; terpenoid biosynthesis. Monooxygenase involved in the biosynthesis of limonoids triterpene natural products such as limonin, a compound with insecticidal activity responsible for the bitter taste in citrus. Catalyzes the conversion of dihydroniloticin to the protolimonoid melianol. The chain is Melianol synthase CYP71BQ4 from Citrus sinensis (Sweet orange).